Consider the following 93-residue polypeptide: UPF0728 protein C10orf53 homolog (93 aa).

Belongs to the UPF0728 family.

The polypeptide is UPF0728 protein C10orf53 homolog (Xenopus tropicalis (Western clawed frog)).